The chain runs to 430 residues: Enolase (430 aa).

Gln-164 serves as a coordination point for (2R)-2-phosphoglycerate. The active-site Proton donor is the Glu-208. 3 residues coordinate Mg(2+): Asp-245, Glu-288, and Asp-315. Residues Lys-340, Arg-369, Ser-370, and Lys-391 each coordinate (2R)-2-phosphoglycerate. Catalysis depends on Lys-340, which acts as the Proton acceptor.

Belongs to the enolase family. Mg(2+) is required as a cofactor.

The protein resides in the cytoplasm. The protein localises to the secreted. Its subcellular location is the cell surface. The catalysed reaction is (2R)-2-phosphoglycerate = phosphoenolpyruvate + H2O. Its pathway is carbohydrate degradation; glycolysis; pyruvate from D-glyceraldehyde 3-phosphate: step 4/5. In terms of biological role, catalyzes the reversible conversion of 2-phosphoglycerate (2-PG) into phosphoenolpyruvate (PEP). It is essential for the degradation of carbohydrates via glycolysis. The polypeptide is Enolase (Thermococcus onnurineus (strain NA1)).